The chain runs to 301 residues: MPKPIALSRNPSTPLFQWRAYYEMTKPKVVALMLLTVLVGMCLAVPGVVPIVPLIAGMAGIGMMAGSAAAFNHLIDRRIDGLMARTYNRPLPKGRVSIAKALTFSCSLGILGFVVLYVLVNPLTAWLTFASLIGYAVVYTAYLKRATPQNIVVGGLAGAMPPLLGWTAVTGEFHGNALLLVIIIFAWTPPHFWALAIHRRVEYAKVDIPMLPVTHGVEFTKTCIFLYTILLAIACLLPVLVGMCGPVYLVSSTLLSVTFIYKAWQLKFHEEPGMAMKLFKFSIYHLMLLFIALLVDHYLWL.

9 helical membrane passes run Val29–Val49, Ile51–Phe71, Val96–Val118, Leu123–Leu143, Ile151–Gly171, Ala177–Ile197, Cys223–Met243, Cys244–Trp264, and Phe281–Leu301.

Belongs to the UbiA prenyltransferase family. Protoheme IX farnesyltransferase subfamily.

The protein resides in the cell inner membrane. It catalyses the reaction heme b + (2E,6E)-farnesyl diphosphate + H2O = Fe(II)-heme o + diphosphate. It participates in porphyrin-containing compound metabolism; heme O biosynthesis; heme O from protoheme: step 1/1. Converts heme B (protoheme IX) to heme O by substitution of the vinyl group on carbon 2 of heme B porphyrin ring with a hydroxyethyl farnesyl side group. In Shewanella halifaxensis (strain HAW-EB4), this protein is Protoheme IX farnesyltransferase.